Reading from the N-terminus, the 739-residue chain is MPNMEPTTKEIKEQKIYQEMGLTDSEYELVCSILGREPNYTETGLFSVMWSEHCSYKNSKPVLRKFPTEGKQVLQGPGEGAGIVDIGDGLGVAFKVESHNHPSYVEPYQGAATGVGGIIRDVFSMGARPIAMLNSLRFGELDTPHAKYLVSEVVAGIAGYGNSIGIPTVGGEIQFDPCYTKNPLVNAMCVGLIEAKDIQKGQAKGIGNPVMYVGAKTGRDGIHGATFASVEFSEEGEQQRSAVQVGDPFMEKLLLEACLDVIRDHSDILVGIQDMGAAGLVSSSSEMASKAGAGLELIMDDVPQRELHMTPYEMLLSESQERMLLCVKKGHVEEIQALFERYGLEAVVIGKVTDDKMYKIIHHGEVVANVPVDALAEDAPVYHKPSKEPARYQAFQEEDAFVPVIDDVVGVWKELLAQPTIASKRHIYEQYDYQVRTDTAVVPGSDAAIVRVRGTEKAIAMTTDCNSRYLYLDPEVGGAIAVAEAARNIVCSGGKPLAITDGLNFGNPEKPEIFWEIEKAADGISAACLELDTPVISGNVSLYNETDGTGIYPTPVIGMVGLVEDLAHITTQDFKNSGDVIFLIGETKAEYSGSELQKLQQGKISGRAPELDLATEKKYQQLLLTAIQEGLVASSHDLAEGGFGVALAEATFKAGLGADVEVPFELNQLFSESQSRFLVSVKPENEAAFAKLMELEKVYRLGVVTADETIRVKHKEELVTASTSDLRSIWEGAIPCLLK.

Residue histidine 53 is part of the active site. ATP contacts are provided by tyrosine 56 and lysine 95. Glutamate 97 contacts Mg(2+). Substrate is bound by residues 98–101 (SHNH) and arginine 120. Histidine 99 serves as the catalytic Proton acceptor. Aspartate 121 is a Mg(2+) binding site. Glutamine 244 contacts substrate. Residue aspartate 274 participates in Mg(2+) binding. Substrate is bound at residue 318-320 (ESQ). Residues aspartate 501 and glycine 538 each coordinate ATP. Residue asparagine 539 coordinates Mg(2+). Serine 541 provides a ligand contact to substrate.

It belongs to the FGAMS family. In terms of assembly, monomer. Part of the FGAM synthase complex composed of 1 PurL, 1 PurQ and 2 PurS subunits.

It is found in the cytoplasm. The catalysed reaction is N(2)-formyl-N(1)-(5-phospho-beta-D-ribosyl)glycinamide + L-glutamine + ATP + H2O = 2-formamido-N(1)-(5-O-phospho-beta-D-ribosyl)acetamidine + L-glutamate + ADP + phosphate + H(+). The protein operates within purine metabolism; IMP biosynthesis via de novo pathway; 5-amino-1-(5-phospho-D-ribosyl)imidazole from N(2)-formyl-N(1)-(5-phospho-D-ribosyl)glycinamide: step 1/2. In terms of biological role, part of the phosphoribosylformylglycinamidine synthase complex involved in the purines biosynthetic pathway. Catalyzes the ATP-dependent conversion of formylglycinamide ribonucleotide (FGAR) and glutamine to yield formylglycinamidine ribonucleotide (FGAM) and glutamate. The FGAM synthase complex is composed of three subunits. PurQ produces an ammonia molecule by converting glutamine to glutamate. PurL transfers the ammonia molecule to FGAR to form FGAM in an ATP-dependent manner. PurS interacts with PurQ and PurL and is thought to assist in the transfer of the ammonia molecule from PurQ to PurL. The polypeptide is Phosphoribosylformylglycinamidine synthase subunit PurL (Listeria innocua serovar 6a (strain ATCC BAA-680 / CLIP 11262)).